The chain runs to 730 residues: MQGLAFLAALACWRCISLTCGATGALPTTATTITRSATQLINGRTNLSIELEFNGTSFFLNWQNLLNVITEPALTELWTSAEVAEDLRVTLKKRQSLFFPNKTVVISGDGHRYTCEVPTSSQTYNITKGFNYSALPGHLGGFGINARLVLGDIFASKWSLFARDTPEYRVFYPMNVMAVKFSISIGNNESGVALYGVVSEDFVVVTLHNRSKEANETASHLLFGLPDSLPSLKGHATYDELTFARNAKYALVAILPKDSYQTLLTENYTRIFLNMTESTPLEFTRTIQTRIVSIEARRACAAQEAAPDIFLVLFQMLVAHFLVARGIAEHRFVEVDCVCRQYAELYFLRRISRLCMPTFTTVGYNHTTLGAVAATQIARVSATKLASLPRSSQETVLAMVQLGARDGAVPSSILEGIAMVVEHMYTAYTYVYTLGDTERKLMLDIHTVLTDSCPPKDSGVSEKLLRTYLMFTSMCTNIELGEMIARFSKPDSLNIYRAFSPCFLGLRYDLHPAKLRAEAPQSSALTRTAVARGTSGFAELLHALHLDSLNLIPAINCSKITADKIIATVPLPHVTYIISSEALSNAVVYEVSEIFLKSAMFISAIKPDCSGFNFSQIDRHIPIVYNISTPRRGCPLCDSVIMSYDESDGLQSLMYVTNERVQTNLFLDKSPFFDNNNLHIHYLWLRDNGTVVEIRGMYRRRAASALFLILSFIGFSGVIYFLYRLFSILY.

A signal peptide spans 1–21; it reads MQGLAFLAALACWRCISLTCG. Residues 22 to 706 are Virion surface-facing; the sequence is ATGALPTTAT…MYRRRAASAL (685 aa). Asn-46, Asn-54, Asn-101, Asn-125, Asn-131, Asn-188, Asn-209, Asn-215, Asn-267, Asn-274, Asn-365, Asn-556, Asn-613, Asn-626, and Asn-688 each carry an N-linked (GlcNAc...) asparagine; by host glycan. Residues 190-254 are interaction with gL; sequence SGVALYGVVS…RNAKYALVAI (65 aa). A helical membrane pass occupies residues 707-727; that stretch reads FLILSFIGFSGVIYFLYRLFS. The Intravirion segment spans residues 728 to 730; that stretch reads ILY.

Belongs to the herpesviridae glycoprotein H family. Interacts with glycoprotein L (gL); this interaction is necessary for the correct processing and cell surface expression of gH. The heterodimer gH/gL seems to interact with gB trimers during fusion. When in complex with gL, interacts with host EPHA2; this interaction triggers EPHA2 phosphorylation and endocytosis allowing KSHV entry. N-glycosylated, O-glycosylated, and sialylated.

It is found in the virion membrane. The protein resides in the host cell membrane. It localises to the host endosome membrane. In terms of biological role, the heterodimer glycoprotein H-glycoprotein L is required for the fusion of viral and plasma membranes leading to virus entry into the host cell. Following initial binding to host receptor, membrane fusion is mediated by the fusion machinery composed of gB and the heterodimer gH/gL. May also be involved in the fusion between the virion envelope and the outer nuclear membrane during virion morphogenesis. Targets host EPHA2 to promote KSHV entry. The polypeptide is Envelope glycoprotein H (Homo sapiens (Human)).